We begin with the raw amino-acid sequence, 74 residues long: MDIAAAREIGAGIAVIALAGVGIGLGNIFSTLVSSIARNPAARPHVFGLGMLGFALTEAVALYALLIAFLILFV.

The next 2 membrane-spanning stretches (helical) occupy residues 9 to 29 and 54 to 74; these read IGAG…GNIF and FALT…ILFV.

It belongs to the ATPase C chain family. In terms of assembly, F-type ATPases have 2 components, F(1) - the catalytic core - and F(0) - the membrane proton channel. F(1) has five subunits: alpha(3), beta(3), gamma(1), delta(1), epsilon(1). F(0) has three main subunits: a(1), b(2) and c(10-14). The alpha and beta chains form an alternating ring which encloses part of the gamma chain. F(1) is attached to F(0) by a central stalk formed by the gamma and epsilon chains, while a peripheral stalk is formed by the delta and b chains.

The protein resides in the cell inner membrane. F(1)F(0) ATP synthase produces ATP from ADP in the presence of a proton or sodium gradient. F-type ATPases consist of two structural domains, F(1) containing the extramembraneous catalytic core and F(0) containing the membrane proton channel, linked together by a central stalk and a peripheral stalk. During catalysis, ATP synthesis in the catalytic domain of F(1) is coupled via a rotary mechanism of the central stalk subunits to proton translocation. Its function is as follows. Key component of the F(0) channel; it plays a direct role in translocation across the membrane. A homomeric c-ring of between 10-14 subunits forms the central stalk rotor element with the F(1) delta and epsilon subunits. This chain is ATP synthase subunit c, found in Gluconacetobacter diazotrophicus (strain ATCC 49037 / DSM 5601 / CCUG 37298 / CIP 103539 / LMG 7603 / PAl5).